A 311-amino-acid polypeptide reads, in one-letter code: Malate dehydrogenase (311 aa).

Residues 10-15 (GAGRVG) and aspartate 35 contribute to the NAD(+) site. Substrate contacts are provided by arginine 84 and arginine 90. Residues asparagine 97 and 120-122 (VTN) each bind NAD(+). The substrate site is built by asparagine 122 and arginine 153. Residue histidine 177 is the Proton acceptor of the active site.

It belongs to the LDH/MDH superfamily. MDH type 3 family.

It carries out the reaction (S)-malate + NAD(+) = oxaloacetate + NADH + H(+). Catalyzes the reversible oxidation of malate to oxaloacetate. The chain is Malate dehydrogenase from Nitrosococcus oceani (strain ATCC 19707 / BCRC 17464 / JCM 30415 / NCIMB 11848 / C-107).